The chain runs to 238 residues: RNA-free ribonuclease P (238 aa).

The protein belongs to the HARP family.

The enzyme catalyses Endonucleolytic cleavage of RNA, removing 5'-extranucleotides from tRNA precursor.. In terms of biological role, RNA-free RNase P that catalyzes the removal of the 5'-leader sequence from pre-tRNA to produce the mature 5'-terminus. This Hyperthermus butylicus (strain DSM 5456 / JCM 9403 / PLM1-5) protein is RNA-free ribonuclease P.